The sequence spans 348 residues: RNA 3'-terminal phosphate cyclase (348 aa).

Residues Gln102 and 285 to 288 contribute to the ATP site; that span reads HMGD. His311 functions as the Tele-AMP-histidine intermediate in the catalytic mechanism.

Belongs to the RNA 3'-terminal cyclase family. Type 1 subfamily.

It localises to the cytoplasm. The enzyme catalyses a 3'-end 3'-phospho-ribonucleotide-RNA + ATP = a 3'-end 2',3'-cyclophospho-ribonucleotide-RNA + AMP + diphosphate. Functionally, catalyzes the conversion of 3'-phosphate to a 2',3'-cyclic phosphodiester at the end of RNA. The mechanism of action of the enzyme occurs in 3 steps: (A) adenylation of the enzyme by ATP; (B) transfer of adenylate to an RNA-N3'P to produce RNA-N3'PP5'A; (C) and attack of the adjacent 2'-hydroxyl on the 3'-phosphorus in the diester linkage to produce the cyclic end product. The biological role of this enzyme is unknown but it is likely to function in some aspects of cellular RNA processing. In Korarchaeum cryptofilum (strain OPF8), this protein is RNA 3'-terminal phosphate cyclase.